The following is a 269-amino-acid chain: MIEQQTGSRIRVEALAVAGQEQAEHWAQRLGLPLHDAEADFALQSTDDGLQLQQLGDDAPGAVRVDFVEGAVAHRRLFGGGTGQMIAKAVGIQPGVRPSVLDATAGLGKDAFVLASLGCELSLIERQPIIAALLEDGLARGRDDRDVGSIVARMHLLTGNSIEIIRGWTAEPPQVIYLDPMFPHREKNALVKKEMRLFRPLVGDDMDAPALLEAALALATHRVVVKRPRKAPCIDGPKPGYALDGKSSRYDIYPKKALKPKAVTDDSGA.

Residues 125 to 126 and Asp179 contribute to the S-adenosyl-L-methionine site; that span reads ER.

Belongs to the methyltransferase superfamily. RsmJ family.

Its subcellular location is the cytoplasm. The enzyme catalyses guanosine(1516) in 16S rRNA + S-adenosyl-L-methionine = N(2)-methylguanosine(1516) in 16S rRNA + S-adenosyl-L-homocysteine + H(+). Specifically methylates the guanosine in position 1516 of 16S rRNA. The protein is Ribosomal RNA small subunit methyltransferase J of Pseudomonas savastanoi pv. phaseolicola (strain 1448A / Race 6) (Pseudomonas syringae pv. phaseolicola (strain 1448A / Race 6)).